Reading from the N-terminus, the 440-residue chain is UPF0489 protein C5orf22 homolog (440 aa).

A disordered region spans residues 187–207 (VEGSSSGIQSSTSESSEDGLM). A compositionally biased stretch (low complexity) spans 188-200 (EGSSSGIQSSTSE).

The protein belongs to the UPF0489 family.

The polypeptide is UPF0489 protein C5orf22 homolog (Xenopus tropicalis (Western clawed frog)).